The following is a 188-amino-acid chain: Elongation factor P (188 aa).

At Lys34 the chain carries N6-(3,6-diaminohexanoyl)-5-hydroxylysine.

The protein belongs to the elongation factor P family. May be beta-lysylated on the epsilon-amino group of Lys-34 by the combined action of EpmA and EpmB, and then hydroxylated on the C5 position of the same residue by EpmC (if this protein is present). Lysylation is critical for the stimulatory effect of EF-P on peptide-bond formation. The lysylation moiety may extend toward the peptidyltransferase center and stabilize the terminal 3-CCA end of the tRNA. Hydroxylation of the C5 position on Lys-34 may allow additional potential stabilizing hydrogen-bond interactions with the P-tRNA.

Its subcellular location is the cytoplasm. It participates in protein biosynthesis; polypeptide chain elongation. Involved in peptide bond synthesis. Alleviates ribosome stalling that occurs when 3 or more consecutive Pro residues or the sequence PPG is present in a protein, possibly by augmenting the peptidyl transferase activity of the ribosome. Modification of Lys-34 is required for alleviation. The sequence is that of Elongation factor P from Glaesserella parasuis serovar 5 (strain SH0165) (Haemophilus parasuis).